The chain runs to 191 residues: Nascent polypeptide-associated complex subunit alpha (191 aa).

In terms of domain architecture, NAC-A/B spans 24–89 (SRPERKARKA…AKVEDPNSAA (66 aa)). Positions 126–149 (QDAPSADSSAPAPSGEATDASASG) are disordered. Low complexity predominate over residues 127–139 (DAPSADSSAPAPS). One can recognise a UBA domain in the interval 153–191 (VSDEEIQLIVAQTGVDEAKAREAYISEKGDLINAIMKLQ).

The protein belongs to the NAC-alpha family. In terms of assembly, part of the nascent polypeptide-associated complex (NAC), consisting of EGD2 and EGD1. NAC associates with ribosomes via EGD1.

Its subcellular location is the cytoplasm. It localises to the nucleus. Component of the nascent polypeptide-associated complex (NAC), a dynamic component of the ribosomal exit tunnel, protecting the emerging polypeptides from interaction with other cytoplasmic proteins to ensure appropriate nascent protein targeting. The NAC complex also promotes mitochondrial protein import by enhancing productive ribosome interactions with the outer mitochondrial membrane and blocks the inappropriate interaction of ribosomes translating non-secretory nascent polypeptides with translocation sites in the membrane of the endoplasmic reticulum. EGD2 may also be involved in transcription regulation. The protein is Nascent polypeptide-associated complex subunit alpha (EGD2) of Cryptococcus neoformans var. neoformans serotype D (strain B-3501A) (Filobasidiella neoformans).